A 606-amino-acid chain; its full sequence is Aspartate--tRNA(Asp/Asn) ligase (606 aa).

Glu175 lines the L-aspartate pocket. Positions 199 to 202 are aspartate; the sequence is QLFK. Arg221 serves as a coordination point for L-aspartate. ATP contacts are provided by residues 221-223 and Gln230; that span reads RDE. His453 contributes to the L-aspartate binding site. Position 487 (Glu487) interacts with ATP. L-aspartate is bound at residue Arg494. 539–542 is a binding site for ATP; sequence GWDR. The segment at 564 to 606 is disordered; the sequence is GGVDPLTDAPGTIPAEQRKETGVDFKPEKAAKAAQGEKAGKES. A compositionally biased stretch (basic and acidic residues) spans 579 to 594; that stretch reads EQRKETGVDFKPEKAA.

Belongs to the class-II aminoacyl-tRNA synthetase family. Type 1 subfamily. As to quaternary structure, homodimer.

It localises to the cytoplasm. It carries out the reaction tRNA(Asx) + L-aspartate + ATP = L-aspartyl-tRNA(Asx) + AMP + diphosphate. Functionally, aspartyl-tRNA synthetase with relaxed tRNA specificity since it is able to aspartylate not only its cognate tRNA(Asp) but also tRNA(Asn). Reaction proceeds in two steps: L-aspartate is first activated by ATP to form Asp-AMP and then transferred to the acceptor end of tRNA(Asp/Asn). In Corynebacterium aurimucosum (strain ATCC 700975 / DSM 44827 / CIP 107346 / CN-1) (Corynebacterium nigricans), this protein is Aspartate--tRNA(Asp/Asn) ligase.